Here is a 136-residue protein sequence, read N- to C-terminus: Large ribosomal subunit protein uL16 (136 aa).

The protein belongs to the universal ribosomal protein uL16 family. Part of the 50S ribosomal subunit.

Its function is as follows. Binds 23S rRNA and is also seen to make contacts with the A and possibly P site tRNAs. The sequence is that of Large ribosomal subunit protein uL16 from Vesicomyosocius okutanii subsp. Calyptogena okutanii (strain HA).